The chain runs to 249 residues: Ribosomal RNA small subunit methyltransferase G (249 aa).

Residues glycine 88, phenylalanine 93, 111-113 (DAT), 139-140 (AE), and arginine 158 each bind S-adenosyl-L-methionine.

This sequence belongs to the methyltransferase superfamily. RNA methyltransferase RsmG family.

It localises to the cytoplasm. Functionally, specifically methylates the N7 position of a guanine in 16S rRNA. This chain is Ribosomal RNA small subunit methyltransferase G, found in Thermus thermophilus (strain ATCC BAA-163 / DSM 7039 / HB27).